The chain runs to 410 residues: 23S rRNA (uracil(747)-C(5))-methyltransferase (410 aa).

Residues Cys61, Cys67, Cys70, and Cys137 each contribute to the [4Fe-4S] cluster site. S-adenosyl-L-methionine is bound by residues Gln253, Tyr279, Glu300, and Asp341. Cys367 serves as the catalytic Nucleophile.

This sequence belongs to the class I-like SAM-binding methyltransferase superfamily. RNA M5U methyltransferase family.

It carries out the reaction uridine(747) in 23S rRNA + S-adenosyl-L-methionine = 5-methyluridine(747) in 23S rRNA + S-adenosyl-L-homocysteine + H(+). Activated by magnesium ions. Functionally, catalyzes the formation of 5-methyl-uridine at position equivalent to 747 (m5U747) in 23S rRNA (m5U859 in the P.abyssi numbering). The polypeptide is 23S rRNA (uracil(747)-C(5))-methyltransferase (Pyrococcus abyssi (strain GE5 / Orsay)).